A 117-amino-acid chain; its full sequence is Probable glycerol dehydratase-reactivating factor small subunit (117 aa).

A Mg(2+)-binding site is contributed by glutamate 31.

The protein belongs to the DdrB/PduH family. In terms of assembly, member of the GDR complex, probably composed of DhaF(2)/DhaG(2). The cofactor is Mg(2+).

Small subunit of the glycerol dehydratase-reactivating factor (GDR), which reactivates suicidally inhibited adenosylcobalamin-dependent glycerol dehydratase. The protein is Probable glycerol dehydratase-reactivating factor small subunit of Citrobacter freundii.